The primary structure comprises 177 residues: Large ribosomal subunit protein uL6 (177 aa).

It belongs to the universal ribosomal protein uL6 family. Part of the 50S ribosomal subunit.

Functionally, this protein binds to the 23S rRNA, and is important in its secondary structure. It is located near the subunit interface in the base of the L7/L12 stalk, and near the tRNA binding site of the peptidyltransferase center. The protein is Large ribosomal subunit protein uL6 of Vibrio parahaemolyticus serotype O3:K6 (strain RIMD 2210633).